A 470-amino-acid polypeptide reads, in one-letter code: uncharacterized protein (470 aa).

In terms of domain architecture, SPX spans 1 to 337 (MKFGHDFKRA…SLTAQPLFFQ (337 aa)). The segment at 118 to 145 (ASNVPSTPSDSTQQPPTNTLPSVSASSQ) is disordered. The span at 122–136 (PSTPSDSTQQPPTNT) shows a compositional bias: low complexity. An RING-type zinc finger spans residues 374–413 (CAICSNVAYKPVRLGCSHVFCLHCLIILQKQKVDFCPLCR).

It localises to the cytoplasm. This is an uncharacterized protein from Schizosaccharomyces pombe (strain 972 / ATCC 24843) (Fission yeast).